A 408-amino-acid polypeptide reads, in one-letter code: MGGMALTGNKAVVYKGKGTVAVEDIGYPELILRDGPGVPKANVNRKCEHGVILKVITTNICGSDQHMVRGRTTAPEGLVLGHEITGEVIETGRDVEFIKKGDIVSVPFNIACGRCVMCKTQKTHVCLNVNPDRPGSAYGYVDMGGWVGGQSEYVMVPYADFQLLVFPDKEQALEKILDLTMLSDIFPTGFHGAYTAGVQTGSTVYIAGAGPVGLAAAHSAQLLGASTVIVGDLNEDRLAQARSFGCETVNVQKHDRLGEQIEQILGEPTVDAAVDCVGFEASGHGNQGEAPAAVLNSIMDVTQVGGSLGIPGLYVTEDPGAKDADAKTGSLKIRFGLGWAKAHTFVTGQTPAMTYNRNLMKAILSGRAQIAKAVNATVISLDDAPKGYSDFDKGAAKKFVIDPHGTLK.

Residue Cys-61 participates in Zn(2+) binding. 3 residues coordinate NAD(+): Gly-62, Ser-63, and His-66. The Zn(2+) site is built by His-82, Cys-112, Cys-115, Cys-118, Cys-126, and Asp-184. 9 residues coordinate NAD(+): Val-212, Asp-232, Arg-237, Val-277, His-284, Pro-311, Leu-313, Gly-348, and Thr-350.

It belongs to the zinc-containing alcohol dehydrogenase family. Zn(2+) serves as cofactor.

The catalysed reaction is formaldehyde + NAD(+) + H2O = formate + NADH + 2 H(+). Activity is not inhibited by EDTA, which is probably not sufficient to displace the bound metal. In terms of biological role, dehydrogenase that catalyzes the NAD(+)-dependent oxidation of formaldehyde. Exhibits lower activity with acetaldehyde (about 10-fold lower than for formaldehyde), but cannot use methanol, ethanol, 1-butanol, glyoxal or formic acid. Is involved in formaldehyde detoxification. The polypeptide is Glutathione-independent formaldehyde dehydrogenase (Bacillus subtilis (strain 168)).